The chain runs to 122 residues: Large ribosomal subunit protein uL14c (122 aa).

It belongs to the universal ribosomal protein uL14 family. In terms of assembly, part of the 50S ribosomal subunit.

The protein localises to the plastid. It localises to the chloroplast. Its function is as follows. Binds to 23S rRNA. The sequence is that of Large ribosomal subunit protein uL14c from Lotus japonicus (Lotus corniculatus var. japonicus).